Consider the following 469-residue polypeptide: Probable Xaa-Pro aminopeptidase PEPP (469 aa).

Residues Asp-264, Asp-275, Glu-398, and Glu-438 each contribute to the Mn(2+) site.

Belongs to the peptidase M24B family. Mn(2+) serves as cofactor.

The enzyme catalyses Release of any N-terminal amino acid, including proline, that is linked to proline, even from a dipeptide or tripeptide.. Its function is as follows. Catalyzes the removal of a penultimate prolyl residue from the N-termini of peptides. This is Probable Xaa-Pro aminopeptidase PEPP (PEPP) from Ajellomyces capsulatus (strain G186AR / H82 / ATCC MYA-2454 / RMSCC 2432) (Darling's disease fungus).